We begin with the raw amino-acid sequence, 290 residues long: Ribosomal RNA small subunit methyltransferase A (290 aa).

S-adenosyl-L-methionine-binding residues include Asn-27, Leu-29, Gly-54, Glu-75, Asp-100, and Asn-125.

It belongs to the class I-like SAM-binding methyltransferase superfamily. rRNA adenine N(6)-methyltransferase family. RsmA subfamily.

The protein localises to the cytoplasm. It carries out the reaction adenosine(1518)/adenosine(1519) in 16S rRNA + 4 S-adenosyl-L-methionine = N(6)-dimethyladenosine(1518)/N(6)-dimethyladenosine(1519) in 16S rRNA + 4 S-adenosyl-L-homocysteine + 4 H(+). Specifically dimethylates two adjacent adenosines (A1518 and A1519) in the loop of a conserved hairpin near the 3'-end of 16S rRNA in the 30S particle. May play a critical role in biogenesis of 30S subunits. The protein is Ribosomal RNA small subunit methyltransferase A of Streptococcus agalactiae serotype Ia (strain ATCC 27591 / A909 / CDC SS700).